A 158-amino-acid chain; its full sequence is Style cell-cycle inhibitor 1-B (158 aa).

Basic and acidic residues-rich tracts occupy residues 1–11 (MGSDKKTTEEK) and 22–47 (PRDEVKSKRQNIKGDEERRKEKDKSK). The tract at residues 1–88 (MGSDKKTTEE…DKSKNKFEEL (88 aa)) is disordered. Basic residues-rich tracts occupy residues 48 to 58 (KEKHKSHKSKC) and 67 to 81 (GEKHKTKSHKHKDKS).

Specifically expressed in flowers pistils, especially in stigmas and styles. Barely detected in roots, stems, leaves, sepals, petals and stamen.

It localises to the nucleus. Its function is as follows. Component of the auxin signaling transduction pathway that regulates cell proliferation and differentiation during flowers stigmas and styles development. Involved in the regulation of auxin-related genes. This Nicotiana tabacum (Common tobacco) protein is Style cell-cycle inhibitor 1-B.